The following is a 266-amino-acid chain: MFLVNSFLKGGGGGGGGGGLGGGLGNVLGGLISGAGGGGGGGGGGGGGGAGGGGTAMRILGGVISAISEAAAQYNPEPPPPRTHYSNIEANESEEVRQFRRLFAQLAGDDMEVSATELMNILNKVVTRHPDLKTDGFGLDTCRSMVAVMDSDTTGKLGFEEFKYLWNNIKKWQAIYKQFDVDRSGTICSRELPGAFEAAGFHLNEHLYNMIIRRYSDEAGNMDFDNFISCLVRLDAMFRAFKSLDKDGTGQIQVNIQEWLQLTMYS.

An N-acetylmethionine modification is found at M1. S6 is modified (phosphoserine). An EF-hand 1; atypical domain is found at 94–128; that stretch reads EEVRQFRRLFAQLAGDDMEVSATELMNILNKVVTR. Ca(2+)-binding residues include A107, D110, E112, E117, D135, D150, D152, T154, K156, and E161. EF-hand domains lie at 137–170, 167–202, 203–231, and 232–266; these read FGLDTCRSMVAVMDSDTTGKLGFEEFKYLWNNIK, NNIKKWQAIYKQFDVDRSGTICSRELPGAFEAAGFH, LNEHLYNMIIRRYSDEAGNMDFDNFISCL, and VRLDAMFRAFKSLDKDGTGQIQVNIQEWLQLTMYS. K177 is subject to N6-acetyllysine. 6 residues coordinate Ca(2+): D180, D182, S184, T186, E191, and D223.

As to quaternary structure, homodimer or heterodimer of a large (catalytic) and a small (regulatory) subunit. In presence of calcium, the heterodimer dissociates. Post-translationally, the N-terminus is blocked.

It is found in the cytoplasm. It localises to the cell membrane. In terms of biological role, regulatory subunit of the calcium-regulated non-lysosomal thiol-protease which catalyzes limited proteolysis of substrates involved in cytoskeletal remodeling and signal transduction. Essential for embryonic development. The chain is Calpain small subunit 1 (CAPNS1) from Oryctolagus cuniculus (Rabbit).